Reading from the N-terminus, the 628-residue chain is FAD-linked oxidoreductase hmp9 (628 aa).

The N-terminal stretch at 1-29 is a signal peptide; sequence MFCIIRAQLLLLLHLLVLALLLVGTVCNA. Residues 34-53 are disordered; the sequence is GHPSELEPLALKRGGSPRDD. Asn-80 and Asn-133 each carry an N-linked (GlcNAc...) asparagine glycan. The region spanning 152–337 is the FAD-binding PCMH-type domain; that stretch reads LGQLPVYAID…LKTKIKAYPN (186 aa). The N-linked (GlcNAc...) asparagine glycan is linked to Asn-356.

It belongs to the oxygen-dependent FAD-linked oxidoreductase family.

Its pathway is secondary metabolite biosynthesis. In terms of biological role, FAD-linked oxidoreductase; part of the gene cluster that mediates the biosynthesis of hypothemycin, a resorcylic acid lactone (RAL) that irreversibly inhibits a subset of protein kinases with a conserved cysteine in the ATP binding site such as human ERK2. The first step is performed by both PKSs hmp3 and hmp8 and leads to the production of 7',8'-dehydrozearalenol (DHZ). The highly reducing PKS hpm8 synthesizes the reduced hexaketide (7S,11S,2E,8E)-7,11-dihydroxy-dodeca-2,8-dienoate, which is transferred downstream to the non-reducing PKS hpm3. Hpm3 then extends the reduced hexaketide to a nonaketide, after which regioselective cyclization and macrolactonization affords DHZ. The next step is the conversion of DHZ into aigialomycin C and is performed by the O-methyltransferase hmp5, the FAD-binding monooxygenase hmp7, and the cytochrome P450 monooxygenase hmp1. The wide substrate tolerance of the hmp5 and hmp7 implies that the reactions from DHZ to aigialomycin C can occur in any order. The steps from aigialomycin C to hypothemycin are less well established. The FAD-linked oxidoreductase hmp9 presumably catalyzes oxidation of the C-6' hydroxyl to a ketone. The timing of this oxidation is important, since the resulting enone functional group is a Michael acceptor that can react spontaneously with glutathione, an abundant metabolite in fungal cells. The glutathione S-transferase hmp2 catalyzes cis-trans isomerization of the 7',8' double bond with equilibrium favoring the trans isomer. The hpm6-encoded transporter might preferentially pump hypothemycin out of the cell relative to the trans isomer aigialomycin A. The cis-to-trans isomerization may be coupled with C-4' hydroxylation, since all known hypothemycin analogs containing the enone functional group also have hydroxyl groups at both C-4' and C-5'. In Hypomyces subiculosus (Nectria subiculosa), this protein is FAD-linked oxidoreductase hmp9.